The primary structure comprises 423 residues: Transcription factor AP-2-epsilon (423 aa).

The tract at residues 1 to 108 is disordered; the sequence is MLVHSYSSME…EDAGLLSQPH (108 aa). Residues 14-27 are compositionally biased toward low complexity; it reads GLSSSSPGGRLSQL. A PPxY motif motif is present at residues 50 to 55; that stretch reads YFPPPY. The span at 57-70 shows a compositional bias: low complexity; sequence QSSLSYSQSQDGGY. A compositionally biased stretch (polar residues) spans 79–93; that stretch reads SLNSLHQHQQAAWHS. The H-S-H (helix-span-helix), dimerization stretch occupies residues 276–405; the sequence is RRKAANVTLL…YLLEALKLLD (130 aa).

The protein belongs to the AP-2 family. In terms of assembly, binds DNA as a dimer. Can form homodimers or heterodimers with other AP-2 family members.

It is found in the nucleus. Its function is as follows. Sequence-specific DNA-binding protein that interacts with inducible viral and cellular enhancer elements to regulate transcription of selected genes. AP-2 factors bind to the consensus sequence 5'-GCCNNNGGC-3' and activate genes involved in a large spectrum of important biological functions. The polypeptide is Transcription factor AP-2-epsilon (Danio rerio (Zebrafish)).